The sequence spans 636 residues: Alpha-L-iduronidase (636 aa).

The N-terminal stretch at 1 to 16 (MLSLLLVLTTLARIHA) is a signal peptide. Alpha-D-mannopyranose contacts are provided by proline 39, isoleucine 43, and histidine 45. Alpha-L-iduronate is bound by residues histidine 78, asparagine 169, and glutamate 170. Residue glutamate 170 is the Proton donor of the active site. A glycan (N-linked (GlcNAc...) asparagine) is linked at asparagine 180. Position 257 (lysine 257) interacts with alpha-L-iduronate. An N-linked (GlcNAc...) asparagine glycan is attached at asparagine 268. Alpha-L-iduronate is bound by residues glutamate 293 and glycine 299. Glutamate 293 serves as the catalytic Nucleophile. An alpha-D-mannopyranose-binding site is contributed by tryptophan 300. Alpha-L-iduronate contacts are provided by aspartate 342 and arginine 356. Residues asparagine 365, asparagine 448, asparagine 453, and asparagine 483 are each glycosylated (N-linked (GlcNAc...) asparagine). A disulfide bridge links cysteine 529 with cysteine 565. An N-linked (GlcNAc...) asparagine glycan is attached at asparagine 622.

Belongs to the glycosyl hydrolase 39 family.

It is found in the lysosome. It carries out the reaction Hydrolysis of unsulfated alpha-L-iduronosidic linkages in dermatan sulfate.. In terms of biological role, essential lysosomal hydrolase responsible for the degradation of glycosaminoglycans (GAG) such as heparan sulfate. Required for lysosome function and autophagy. Consequently, has an essential role in the development, maintenance and function of various cells, tissues, and organs, including the muscles and the central nervous system (CNS). The polypeptide is Alpha-L-iduronidase (Drosophila melanogaster (Fruit fly)).